Consider the following 466-residue polypeptide: DNA polymerase delta subunit 3 (466 aa).

Position 2 is an N-acetylalanine (Ala2). 2 disordered regions span residues 145–218 and 255–466; these read PAES…KEVM and EQEV…FQRK. 3 stretches are compositionally biased toward basic and acidic residues: residues 205–218, 255–265, and 281–297; these read DANKETKTEAKEVM, EQEVKEEKKVE, and DLKKSSKKAEPVRMQQK. Lys259 is covalently cross-linked (Glycyl lysine isopeptide (Lys-Gly) (interchain with G-Cter in SUMO); alternate). A Glycyl lysine isopeptide (Lys-Gly) (interchain with G-Cter in SUMO2); alternate cross-link involves residue Lys259. Residue Lys262 forms a Glycyl lysine isopeptide (Lys-Gly) (interchain with G-Cter in SUMO2) linkage. The residue at position 308 (Ser308) is a Phosphoserine. Over residues 350-360 the composition is skewed to pro residues; sequence PSPPPPSPSPE. 2 positions are modified to phosphoserine: Ser407 and Ser409. The residue at position 411 (Thr411) is a Phosphothreonine. A Phosphoserine modification is found at Ser413. Over residues 432-441 the composition is skewed to basic and acidic residues; sequence VKKEPKEERK. A Glycyl lysine isopeptide (Lys-Gly) (interchain with G-Cter in SUMO); alternate cross-link involves residue Lys433. A Glycyl lysine isopeptide (Lys-Gly) (interchain with G-Cter in SUMO2); alternate cross-link involves residue Lys433. Positions 456–463 match the PIP-box motif; it reads QVAITGFF.

In terms of assembly, component of both the DNA polymerase delta and DNA polymerase zeta complexes. The tetrameric DNA polymerase delta complex (Pol-delta4), which consists of POLD1/p125, POLD2/p50, POLD3/p66/p68 and POLD4/p12, with POLD1 bearing DNA polymerase and 3' to 5' proofreading exonuclease activities. Within this complex, directly interacts with POLD2. Following stress caused by DNA damaging agents or by replication stress, POLD4 is degraded and Pol-delta4 is converted into a trimeric form of the complex (Pol-delta3), which consists of POLD1, POLD2 and POLD3. Pol-delta3 is the major form occurring at S phase replication sites, as well as DNA damage sites. Directly interacts with PCNA, as do POLD1 and POLD4; this interaction stimulates Pol-delta polymerase activity. Component of the DNA polymerase zeta complex (POLZ), which consists of REV3L, MAD2L2, POLD2 and POLD3, with REV3L bearing DNA polymerase catalytic activity. The DNA polymerase delta complex interacts with POLDIP2; this interaction is probably mediated through direct binding to POLD2. Ubiquitinated, but not targeted to the proteasome. Sumoylated. Sumoylation by SUMO3 may be predominant.

Its subcellular location is the cytoplasm. The protein localises to the nucleus. Its function is as follows. Accessory component of both the DNA polymerase delta complex and the DNA polymerase zeta complex. As a component of the trimeric and tetrameric DNA polymerase delta complexes (Pol-delta3 and Pol-delta4, respectively), plays a role in high fidelity genome replication, including in lagging strand synthesis, and repair. Required for optimal Pol-delta activity. Stabilizes the Pol-delta complex and plays a major role in Pol-delta stimulation by PCNA. Pol-delta3 and Pol-delta4 are characterized by the absence or the presence of POLD4. They exhibit differences in catalytic activity. Most notably, Pol-delta3 shows higher proofreading activity than Pol-delta4. Although both Pol-delta3 and Pol-delta4 process Okazaki fragments in vitro, Pol-delta3 may also be better suited to fulfill this task, exhibiting near-absence of strand displacement activity compared to Pol-delta4 and stalling on encounter with the 5'-blocking oligonucleotides. Pol-delta3 idling process may avoid the formation of a gap, while maintaining a nick that can be readily ligated. Along with DNA polymerase kappa, DNA polymerase delta carries out approximately half of nucleotide excision repair (NER) synthesis following UV irradiation. In this context, POLD3, along with PCNA and RFC1-replication factor C complex, is required to recruit POLD1, the catalytic subunit of the polymerase delta complex, to DNA damage sites. Under conditions of DNA replication stress, required for the repair of broken replication forks through break-induced replication (BIR). Involved in the translesion synthesis (TLS) of templates carrying O6-methylguanine or abasic sites performed by Pol-delta4, independently of DNA polymerase zeta (REV3L) or eta (POLH). Facilitates abasic site bypass by DNA polymerase delta by promoting extension from the nucleotide inserted opposite the lesion. Also involved in TLS, as a component of the tetrameric DNA polymerase zeta complex. Along with POLD2, dramatically increases the efficiency and processivity of DNA synthesis of the DNA polymerase zeta complex compared to the minimal zeta complex, consisting of only REV3L and REV7. The chain is DNA polymerase delta subunit 3 (POLD3) from Bos taurus (Bovine).